Consider the following 455-residue polypeptide: Chromosomal replication initiator protein DnaA 2 (455 aa).

Residues 1-95 (MLTCNDCSTW…KRSSPLVTPS (95 aa)) are domain I, interacts with DnaA modulators. The segment at 96-112 (IAKPATEVSEENKDFQL) is domain II. A domain III, AAA+ region region spans residues 113–328 (KLNGAYRFDN…GAINKLTAYC (216 aa)). 4 residues coordinate ATP: G157, G159, K160, and T161. Positions 329 to 455 (LLFNKPLTET…IAIDSPQHFV (127 aa)) are domain IV, binds dsDNA.

The protein belongs to the DnaA family. Oligomerizes as a right-handed, spiral filament on DNA at oriC.

It is found in the cytoplasm. In terms of biological role, plays an essential role in the initiation and regulation of chromosomal replication. ATP-DnaA binds to the origin of replication (oriC) to initiate formation of the DNA replication initiation complex once per cell cycle. Binds the DnaA box (a 9 base pair repeat at the origin) and separates the double-stranded (ds)DNA. Forms a right-handed helical filament on oriC DNA; dsDNA binds to the exterior of the filament while single-stranded (ss)DNA is stabiized in the filament's interior. The ATP-DnaA-oriC complex binds and stabilizes one strand of the AT-rich DNA unwinding element (DUE), permitting loading of DNA polymerase. After initiation quickly degrades to an ADP-DnaA complex that is not apt for DNA replication. Binds acidic phospholipids. The chain is Chromosomal replication initiator protein DnaA 2 from Chlamydia trachomatis serovar D (strain ATCC VR-885 / DSM 19411 / UW-3/Cx).